We begin with the raw amino-acid sequence, 716 residues long: Fusoxypene synthase (716 aa).

The sesterterpenoid synthase stretch occupies residues 4–328; sequence LSYQSRLIPP…WLSACSRQNT (325 aa). A Mg(2+)-binding site is contributed by aspartate 96. A substrate-binding site is contributed by aspartate 96. The segment at 187–190 is substrate; it reads RMTN. Asparagine 231 lines the substrate pocket. The interval 235-239 is substrate; that stretch reads SYERE. A geranylfarnesyl diphosphate synthase region spans residues 329–711; the sequence is WKTNCSIDGK…CLATLSMEGC (383 aa). Isopentenyl diphosphate-binding residues include lysine 422, arginine 425, and histidine 454. Positions 461 and 465 each coordinate Mg(2+). Arginine 470 provides a ligand contact to dimethylallyl diphosphate. An isopentenyl diphosphate-binding site is contributed by arginine 471. 5 residues coordinate dimethylallyl diphosphate: lysine 548, threonine 549, glutamine 587, asparagine 594, and lysine 602.

It in the N-terminal section; belongs to the terpene synthase family. In the C-terminal section; belongs to the FPP/GGPP synthase family.

The catalysed reaction is 4 isopentenyl diphosphate + dimethylallyl diphosphate = (2E,6E,10E,14E)-geranylfarnesyl diphosphate + 4 diphosphate. The enzyme catalyses (2E,6E,10E,14E)-geranylfarnesyl diphosphate = fusoxypene A + diphosphate. It catalyses the reaction (2E,6E,10E,14E)-geranylfarnesyl diphosphate = fusoxypene B + diphosphate. It carries out the reaction (2E,6E,10E,14E)-geranylfarnesyl diphosphate = fusoxypene C + diphosphate. The catalysed reaction is (2E,6E,10E,14E)-geranylfarnesyl diphosphate = (-)-astellatene + diphosphate. In terms of biological role, bifunctional sesterterpenoid synthase that performs both prenyl transferase and terpene cyclase activity, converting isopentenyl diphosphate and dimethylallyl diphosphate into geranylfarnesyl diphosphate (GFPP) and then converting GFPP into the enantiomeric sesterterpenes with a 5-6-7-3-5 ring system fusoxypene A, fusoxypene B, fusoxypene C and (-)-astellatene. The polypeptide is Fusoxypene synthase (Fusarium oxysporum (Fusarium vascular wilt)).